A 107-amino-acid polypeptide reads, in one-letter code: Iron-sulfur cluster assembly protein CyaY (107 aa).

It belongs to the frataxin family.

Involved in iron-sulfur (Fe-S) cluster assembly. May act as a regulator of Fe-S biogenesis. The protein is Iron-sulfur cluster assembly protein CyaY of Yersinia pseudotuberculosis serotype O:1b (strain IP 31758).